A 175-amino-acid chain; its full sequence is Ribosome maturation factor RimM (175 aa).

The PRC barrel domain occupies 93–167; sequence DDEFYYSDLI…YIIITLPEVI (75 aa).

This sequence belongs to the RimM family. Binds ribosomal protein uS19.

The protein resides in the cytoplasm. Functionally, an accessory protein needed during the final step in the assembly of 30S ribosomal subunit, possibly for assembly of the head region. Essential for efficient processing of 16S rRNA. May be needed both before and after RbfA during the maturation of 16S rRNA. It has affinity for free ribosomal 30S subunits but not for 70S ribosomes. The polypeptide is Ribosome maturation factor RimM (Ehrlichia chaffeensis (strain ATCC CRL-10679 / Arkansas)).